The chain runs to 622 residues: Palmitoyltransferase ZDHHC17 (622 aa).

The Cytoplasmic portion of the chain corresponds to 1 to 294; sequence MADGPDEYDT…LKADKEFRQK (294 aa). Positions 1-295 are necessary and sufficient for interaction with DNAJC5 and SNAP25; sequence MADGPDEYDT…KADKEFRQKV (295 aa). ANK repeat units lie at residues 41-76, 79-108, 113-142, 146-175, 179-209, 214-243, and 247-276; these read THVD…VRQP, ENVT…IVDQ, LNST…DPSL, EGCS…DVDM, NGMT…SVNL, HKNT…NVDA, and KGES…AKGY. 2 helical membrane-spanning segments follow: residues 295–315 and 316–336; these read VMLG…DLNI and DSWL…QFLS. The Lumenal segment spans residues 337-347; that stretch reads KSFFDHSMHSA. The helical transmembrane segment at 348–368 threads the bilayer; it reads LPLGIYLATKFWMYVTWFFWF. The Cytoplasmic segment spans residues 369 to 371; that stretch reads WND. The helical transmembrane segment at 372-392 threads the bilayer; it reads LSFLSIHLPFLANSVALFYNF. Over 393–470 the chain is Lumenal; it reads GKSWKSDPGI…GNCVGAGNHR (78 aa). Residues 427–477 form the DHHC domain; sequence IFCSTCLIRKPVRSKHCGVCNRCIAKFDHHCPWVGNCVGAGNHRYFMGYLF. The S-palmitoyl cysteine intermediate role is filled by Cys457. The chain crosses the membrane as a helical span at residues 471-491; that stretch reads YFMGYLFFLLFMICWMIYGCV. The Cytoplasmic segment spans residues 492–506; that stretch reads SYWGLHCETTYTKDG. Residues 507–526 form a helical membrane-spanning segment; the sequence is FWTYITQIATCSPWMFWMFL. The Lumenal portion of the chain corresponds to 527–529; sequence NSV. A helical transmembrane segment spans residues 530-552; sequence FHFMWVAVLLMCQMYQITCLGIT. The Cytoplasmic portion of the chain corresponds to 553-622; that stretch reads TNERMNARRY…QISGSGYQLV (70 aa).

The protein belongs to the DHHC palmitoyltransferase family. AKR/ZDHHC17 subfamily. Interacts (via ANK repeats) with numerous proteins (via the consensus sequence motif [VIAP]-[VIT]-x-x-Q-P). Interacts (via ANK repeats) with CLIP3. Interacts (via ANK repeats) with HTT. Interacts (via ANK repeats) with DNAJC5 (via C-terminus). Interacts (via ANK repeats) with MAP6. Interacts (via ANK repeats) with SNAP23. Interacts (via ANK repeats) with SNAP25. Interacts (via ANK repeats) with EVL. Interacts with SPRED1 and SPRED3. Interacts with GPM6A and OPTN. May interact (via ANK repeats) with SPRED2. May interact with NTRK1; may regulate its localization and function. Autopalmitoylated. Autopalmitoylation has a regulatory role in ZDHHC17-mediated Mg(2+) transport.

The protein localises to the golgi apparatus membrane. It localises to the cytoplasmic vesicle membrane. The protein resides in the presynaptic cell membrane. The enzyme catalyses L-cysteinyl-[protein] + hexadecanoyl-CoA = S-hexadecanoyl-L-cysteinyl-[protein] + CoA. It catalyses the reaction L-cysteinyl-[protein] + tetradecanoyl-CoA = S-tetradecanoyl-L-cysteinyl-[protein] + CoA. It carries out the reaction L-cysteinyl-[protein] + octadecanoyl-CoA = S-octadecanoyl-L-cysteinyl-[protein] + CoA. Palmitoyltransferase that catalyzes the addition of palmitate onto various protein substrates and is involved in a variety of cellular processes. Has no stringent fatty acid selectivity and in addition to palmitate can also transfer onto target proteins myristate from tetradecanoyl-CoA and stearate from octadecanoyl-CoA. Palmitoyltransferase specific for a subset of neuronal proteins, including SNAP25, DLG4/PSD95, GAD2, SYT1 and HTT. Also palmitoylates neuronal protein GPM6A as well as SPRED1 and SPRED3. Could also play a role in axonogenesis through the regulation of NTRK1 and the downstream ERK1/ERK2 signaling cascade. May be involved in the sorting or targeting of critical proteins involved in the initiating events of endocytosis at the plasma membrane. May play a role in Mg(2+) transport. Could also palmitoylate DNAJC5 and regulate its localization to the Golgi membrane. Palmitoylates CASP6, thereby preventing its dimerization and subsequent activation. This chain is Palmitoyltransferase ZDHHC17, found in Rattus norvegicus (Rat).